The primary structure comprises 281 residues: 16S rRNA (guanine(1405)-N(7))-methyltransferase (281 aa).

Residues Tyr-60, 105–107, Arg-111, Gly-136, Asp-160, 186–187, Phe-203, and Gln-212 each bind S-adenosyl-L-methionine; these read HTS and QG.

Belongs to the methyltransferase superfamily. Aminoglycoside resistance family.

It carries out the reaction guanosine(1405) in 16S rRNA + S-adenosyl-L-methionine = N(7)-methylguanosine(1405) in 16S rRNA + S-adenosyl-L-homocysteine. Functionally, specifically methylates the N(7) position of guanine 1405 in 16S rRNA. Confers resistance to various aminoglycosides, including gentamicin and kanamycin. The protein is 16S rRNA (guanine(1405)-N(7))-methyltransferase (rmtC) of Proteus mirabilis.